Reading from the N-terminus, the 294-residue chain is 4-hydroxy-tetrahydrodipicolinate synthase (294 aa).

Thr-47 is a binding site for pyruvate. The active-site Proton donor/acceptor is the Tyr-135. Lys-163 (schiff-base intermediate with substrate) is an active-site residue. Val-205 serves as a coordination point for pyruvate.

This sequence belongs to the DapA family. Homotetramer; dimer of dimers.

Its subcellular location is the cytoplasm. The enzyme catalyses L-aspartate 4-semialdehyde + pyruvate = (2S,4S)-4-hydroxy-2,3,4,5-tetrahydrodipicolinate + H2O + H(+). It functions in the pathway amino-acid biosynthesis; L-lysine biosynthesis via DAP pathway; (S)-tetrahydrodipicolinate from L-aspartate: step 3/4. Functionally, catalyzes the condensation of (S)-aspartate-beta-semialdehyde [(S)-ASA] and pyruvate to 4-hydroxy-tetrahydrodipicolinate (HTPA). The protein is 4-hydroxy-tetrahydrodipicolinate synthase of Rickettsia bellii (strain OSU 85-389).